The primary structure comprises 171 residues: Ribosome maturation factor RimM (171 aa).

In terms of domain architecture, PRC barrel spans 96–170 (AEGEYYYHEI…LVTIHVMEGL (75 aa)).

This sequence belongs to the RimM family. In terms of assembly, binds ribosomal protein uS19.

Its subcellular location is the cytoplasm. Functionally, an accessory protein needed during the final step in the assembly of 30S ribosomal subunit, possibly for assembly of the head region. Essential for efficient processing of 16S rRNA. May be needed both before and after RbfA during the maturation of 16S rRNA. It has affinity for free ribosomal 30S subunits but not for 70S ribosomes. The protein is Ribosome maturation factor RimM of Bacillus mycoides (strain KBAB4) (Bacillus weihenstephanensis).